The primary structure comprises 226 residues: MNPMQADAKQLLQEFKQLLQENEITEEKCNIGLAPVTLALTSTQAELANAARSVFTVAQDVSRFGNMGAYTGEVSAELLKDSQIEYVLIGHSERREYFAESAAILNAKAQNALNAGLKVIYCVGESLEQRESGQAEVVVLQQICDLASVVTAEQWPHIVIAYEPIWAIGTGKTASPEDAQTMHAKIREGLTQITSHGANMAILYGGSVKAENAVELAACPDINGAL.

The active-site Electrophile is the His91. Glu163 (proton acceptor) is an active-site residue. Substrate-binding residues include Gly169 and Ser207.

This sequence belongs to the triosephosphate isomerase family. As to quaternary structure, homodimer.

The protein resides in the cytoplasm. It catalyses the reaction D-glyceraldehyde 3-phosphate = dihydroxyacetone phosphate. Its pathway is carbohydrate biosynthesis; gluconeogenesis. The protein operates within carbohydrate degradation; glycolysis; D-glyceraldehyde 3-phosphate from glycerone phosphate: step 1/1. Functionally, involved in the gluconeogenesis. Catalyzes stereospecifically the conversion of dihydroxyacetone phosphate (DHAP) to D-glyceraldehyde-3-phosphate (G3P). In Rhizobium etli (strain ATCC 51251 / DSM 11541 / JCM 21823 / NBRC 15573 / CFN 42), this protein is Triosephosphate isomerase.